The sequence spans 431 residues: GTPase Obg (431 aa).

In terms of domain architecture, Obg spans 1 to 158 (MFVDQVKISL…IEVTLELKLL (158 aa)). The interval 118 to 144 (KGGRGGRGNSRFASPRNPAPDFSENGE) is disordered. In terms of domain architecture, OBG-type G spans 159 to 330 (ADVGLVGFPS…LLYAIADKLE (172 aa)). Residues 165 to 172 (GFPSVGKS), 190 to 194 (FTTIK), 212 to 215 (DLPG), 282 to 285 (NKMD), and 311 to 313 (STF) each bind GTP. The Mg(2+) site is built by S172 and T192. Residues 353-431 (KHTPSQDKFT…ILGGEFEFVE (79 aa)) form the OCT domain.

It belongs to the TRAFAC class OBG-HflX-like GTPase superfamily. OBG GTPase family. In terms of assembly, monomer. Mg(2+) serves as cofactor.

It localises to the cytoplasm. Functionally, an essential GTPase which binds GTP, GDP and possibly (p)ppGpp with moderate affinity, with high nucleotide exchange rates and a fairly low GTP hydrolysis rate. Plays a role in control of the cell cycle, stress response, ribosome biogenesis and in those bacteria that undergo differentiation, in morphogenesis control. The sequence is that of GTPase Obg from Staphylococcus saprophyticus subsp. saprophyticus (strain ATCC 15305 / DSM 20229 / NCIMB 8711 / NCTC 7292 / S-41).